The chain runs to 342 residues: Renalase (342 aa).

An N-terminal signal peptide occupies residues 1–17; it reads MSRVLVVGAGLTGSLCA. Residues threonine 12, arginine 42, and 61-62 contribute to the FAD site; that span reads QY.

The protein belongs to the renalase family. Requires FAD as cofactor. As to expression, expressed predominantly in kidney and testis with lower levels in liver, heart and embryo and weak expression in brain and skeletal muscle.

The protein resides in the secreted. The catalysed reaction is 1,2-dihydro-beta-NAD + O2 + H(+) = H2O2 + NAD(+). It carries out the reaction 1,2-dihydro-beta-NADP + O2 + H(+) = H2O2 + NADP(+). The enzyme catalyses 1,6-dihydro-beta-NADP + O2 + H(+) = H2O2 + NADP(+). It catalyses the reaction 1,6-dihydro-beta-NAD + O2 + H(+) = H2O2 + NAD(+). Its function is as follows. Catalyzes the oxidation of the less abundant 1,2-dihydro-beta-NAD(P) and 1,6-dihydro-beta-NAD(P) to form beta-NAD(P)(+). The enzyme hormone is secreted by the kidney, and circulates in blood and modulates cardiac function and systemic blood pressure. Lowers blood pressure in vivo by decreasing cardiac contractility and heart rate and preventing a compensatory increase in peripheral vascular tone, suggesting a causal link to the increased plasma catecholamine and heightened cardiovascular risk. High concentrations of catecholamines activate plasma renalase and promotes its secretion and synthesis. The sequence is that of Renalase from Mus musculus (Mouse).